The following is a 336-amino-acid chain: Phosphoribosylformylglycinamidine cyclo-ligase (336 aa).

It belongs to the AIR synthase family.

The protein resides in the cytoplasm. The enzyme catalyses 2-formamido-N(1)-(5-O-phospho-beta-D-ribosyl)acetamidine + ATP = 5-amino-1-(5-phospho-beta-D-ribosyl)imidazole + ADP + phosphate + H(+). It participates in purine metabolism; IMP biosynthesis via de novo pathway; 5-amino-1-(5-phospho-D-ribosyl)imidazole from N(2)-formyl-N(1)-(5-phospho-D-ribosyl)glycinamide: step 2/2. The chain is Phosphoribosylformylglycinamidine cyclo-ligase from Caldanaerobacter subterraneus subsp. tengcongensis (strain DSM 15242 / JCM 11007 / NBRC 100824 / MB4) (Thermoanaerobacter tengcongensis).